Consider the following 65-residue polypeptide: Large ribosomal subunit protein bL28 (65 aa).

The disordered stretch occupies residues 1-26 (MARRDALTGKSALSGQSRSHALNATK). Over residues 11-22 (SALSGQSRSHAL) the composition is skewed to polar residues.

It belongs to the bacterial ribosomal protein bL28 family.

The protein is Large ribosomal subunit protein bL28 of Mycoplasma mycoides subsp. mycoides SC (strain CCUG 32753 / NCTC 10114 / PG1).